The primary structure comprises 274 residues: Rhamnulose-1-phosphate aldolase (274 aa).

Glu117 is a catalytic residue. Residues His141, His143, and His212 each contribute to the Zn(2+) site.

The protein belongs to the aldolase class II family. RhaD subfamily. In terms of assembly, homotetramer. The cofactor is Zn(2+).

The protein resides in the cytoplasm. It catalyses the reaction L-rhamnulose 1-phosphate = (S)-lactaldehyde + dihydroxyacetone phosphate. Its pathway is carbohydrate degradation; L-rhamnose degradation; glycerone phosphate from L-rhamnose: step 3/3. Functionally, catalyzes the reversible cleavage of L-rhamnulose-1-phosphate to dihydroxyacetone phosphate (DHAP) and L-lactaldehyde. This is Rhamnulose-1-phosphate aldolase from Pectobacterium carotovorum subsp. carotovorum (strain PC1).